Consider the following 189-residue polypeptide: Density-regulated protein homolog (189 aa).

One can recognise an SUI1 domain in the interval 105-172; that stretch reads ICVSRAARGK…DLFDVIPEKW (68 aa).

It belongs to the DENR family. In terms of assembly, interacts with MCTS1.

Regulates translation as part of a complex with MCTS1. Specifically required for translational re-initiation in mRNAs containing upstream open reading frames (uORFs). Not required for standard translational initiation. Regulates expression of a subset of gene products including mbc, InR and EcR. This Drosophila melanogaster (Fruit fly) protein is Density-regulated protein homolog.